The primary structure comprises 310 residues: Mitogen-activated protein kinase kinase 9 (310 aa).

The region spanning 47–306 (LEKLNVLGCG…APQLLAHPFL (260 aa)) is the Protein kinase domain. ATP is bound by residues 53-61 (LGCGNGGIV) and lysine 76. The Proton acceptor role is filled by aspartate 167. Residues serine 195 and serine 201 each carry the phosphoserine modification. A Phosphothreonine modification is found at threonine 205.

The protein belongs to the protein kinase superfamily. STE Ser/Thr protein kinase family. MAP kinase kinase subfamily. Phosphorylation at Ser-195 and Ser-201 by MAP kinase kinase kinases positively regulates kinase activity. Autophosphorylated.

It is found in the cytoplasm. The protein resides in the nucleus. The enzyme catalyses L-seryl-[protein] + ATP = O-phospho-L-seryl-[protein] + ADP + H(+). The catalysed reaction is L-threonyl-[protein] + ATP = O-phospho-L-threonyl-[protein] + ADP + H(+). It carries out the reaction L-tyrosyl-[protein] + ATP = O-phospho-L-tyrosyl-[protein] + ADP + H(+). Its function is as follows. MKK9-MPK3/MPK6 module phosphorylates and activates EIN3, leading to the promotion of EIN3-mediated transcription in ethylene signaling. Autophosphorylates and also phosphorylates MPK3 and MPK6. Plays an important role in ethylene and camalexin biosynthesis and in salt stress response. MKK9-MPK6 module positively regulates leaf senescence. In Arabidopsis thaliana (Mouse-ear cress), this protein is Mitogen-activated protein kinase kinase 9 (MKK9).